A 185-amino-acid chain; its full sequence is CDP-diacylglycerol--glycerol-3-phosphate 3-phosphatidyltransferase (185 aa).

The next 4 membrane-spanning stretches (helical) occupy residues 7–26 (IFLT…AFYL), 33–52 (FITT…DGYL), 89–108 (FWIT…ISAL), and 151–172 (IAAI…IQYL).

This sequence belongs to the CDP-alcohol phosphatidyltransferase class-I family.

The protein resides in the cell membrane. The catalysed reaction is a CDP-1,2-diacyl-sn-glycerol + sn-glycerol 3-phosphate = a 1,2-diacyl-sn-glycero-3-phospho-(1'-sn-glycero-3'-phosphate) + CMP + H(+). It functions in the pathway phospholipid metabolism; phosphatidylglycerol biosynthesis; phosphatidylglycerol from CDP-diacylglycerol: step 1/2. This protein catalyzes the committed step to the synthesis of the acidic phospholipids. The polypeptide is CDP-diacylglycerol--glycerol-3-phosphate 3-phosphatidyltransferase (pgsA) (Haemophilus influenzae (strain ATCC 51907 / DSM 11121 / KW20 / Rd)).